Here is a 623-residue protein sequence, read N- to C-terminus: Sulfite reductase [NADPH] flavoprotein alpha-component (623 aa).

The interval 1–32 (MSFQKNEYSHKNVSEDNNGQGGNPPIASPLND) is disordered. The Flavodoxin-like domain occupies 87-225 (LTIIFASQTG…AAEEWRKNAL (139 aa)). FMN is bound by residues 93-98 (SQTGNA), 140-143 (STNG), and 176-185 (LGDSSYEFFC). The FAD-binding FR-type domain occupies 258–472 (QNPYTATLLT…VEHNNNFKLP (215 aa)). FAD is bound by residues Thr346, Ala380, 410–413 (RLYS), 428–430 (TVG), Tyr434, and 443–446 (GGAS). NADP(+)-binding positions include 543 to 544 (SR), 549 to 553 (KVYVQ), and Asp585. Tyr623 contributes to the FAD binding site.

The protein belongs to the NADPH-dependent sulphite reductase flavoprotein subunit CysJ family. It in the N-terminal section; belongs to the flavodoxin family. This sequence in the C-terminal section; belongs to the flavoprotein pyridine nucleotide cytochrome reductase family. As to quaternary structure, alpha(8)-beta(8). The alpha component is a flavoprotein, the beta component is a hemoprotein. Requires FAD as cofactor. FMN serves as cofactor.

The catalysed reaction is hydrogen sulfide + 3 NADP(+) + 3 H2O = sulfite + 3 NADPH + 4 H(+). The protein operates within sulfur metabolism; hydrogen sulfide biosynthesis; hydrogen sulfide from sulfite (NADPH route): step 1/1. In terms of biological role, component of the sulfite reductase complex that catalyzes the 6-electron reduction of sulfite to sulfide. This is one of several activities required for the biosynthesis of L-cysteine from sulfate. The flavoprotein component catalyzes the electron flow from NADPH -&gt; FAD -&gt; FMN to the hemoprotein component. The sequence is that of Sulfite reductase [NADPH] flavoprotein alpha-component from Vibrio parahaemolyticus serotype O3:K6 (strain RIMD 2210633).